Here is a 266-residue protein sequence, read N- to C-terminus: Small ribosomal subunit protein uS2 (266 aa).

The protein belongs to the universal ribosomal protein uS2 family.

The sequence is that of Small ribosomal subunit protein uS2 from Paramagnetospirillum magneticum (strain ATCC 700264 / AMB-1) (Magnetospirillum magneticum).